The following is a 558-amino-acid chain: Oligo-1,6-glucosidase (558 aa).

Ca(2+) contacts are provided by Asp21, Asn23, Asp25, and Asp29. Asp199 serves as the catalytic Nucleophile. Catalysis depends on Glu255, which acts as the Proton donor.

Belongs to the glycosyl hydrolase 13 family.

It localises to the cytoplasm. It catalyses the reaction Hydrolysis of (1-&gt;6)-alpha-D-glucosidic linkages in some oligosaccharides produced from starch and glycogen by alpha-amylase, and in isomaltose.. The sequence is that of Oligo-1,6-glucosidase (malL) from Bacillus cereus.